The chain runs to 547 residues: Auxin transporter-like protein 3 (547 aa).

Residues 1-74 (MASGSSGGGY…DAWFSCASNQ (74 aa)) lie on the Cytoplasmic side of the membrane. Residues 75-92 (VAQVLLTLPYSFAQLGMA) traverse the membrane as a helical segment. The Extracellular segment spans residues 93–94 (SG). The chain crosses the membrane as a helical span at residues 95–115 (LLFQLFYGLLGSWTAYLISIL). Residues 116–151 (YLEYRTRKERDKVDFRNHVIQWFEVLDGLLGRHWRN) lie on the Cytoplasmic side of the membrane. Residues 152–172 (VGLAFNCTFLLFGSVIQLIGC) traverse the membrane as a helical segment. Residues 173 to 187 (ASNIYYINDHLDKRT) are Extracellular-facing. The chain crosses the membrane as a helical span at residues 188 to 208 (WTYIFGACCATTVFIPSFHNY). Topologically, residues 209 to 211 (RIW) are cytoplasmic. The helical transmembrane segment at 212-232 (SFLGLLMTTYTAWYIAVASLI) threads the bilayer. Residues 233–247 (HGQVEGVAHSGPTSI) lie on the Extracellular side of the membrane. The chain crosses the membrane as a helical span at residues 248-268 (VLYFTGATNILYTFGGHAVTV). The Cytoplasmic portion of the chain corresponds to 269 to 281 (EIMHAMWRPQKFK). The helical transmembrane segment at 282-302 (AIYLLATVYVLTLTLPSASAA) threads the bilayer. At 303 to 329 (YWAFGDALLTHSNALALLPRTPWRDAA) the chain is on the extracellular side. Residues 330–350 (VVLMLIHQFITFGFACTPLYF) traverse the membrane as a helical segment. The Cytoplasmic portion of the chain corresponds to 351–371 (VWEKLVGLHGCPSLCKRAAAR). A helical membrane pass occupies residues 372 to 392 (LPVVLPIWFLAIIFPFFGPIN). S393 is a topological domain (extracellular). The chain crosses the membrane as a helical span at residues 394 to 414 (AVGSLLVSFTVYIIPSLAYMV). Residues 415–440 (TFRSPQSRQNAVERPPRFAGGWTGAY) are Cytoplasmic-facing. The helical transmembrane segment at 441–461 (VINSFVVAWVLVVGFGFGGWA) threads the bilayer. Topologically, residues 462 to 547 (SITNFVHQVD…HHHRHHRHGL (86 aa)) are extracellular. N509 is a glycosylation site (N-linked (GlcNAc...) asparagine).

Belongs to the amino acid/polyamine transporter 2 family. Amino acid/auxin permease (AAAP) (TC 2.A.18.1) subfamily.

The protein resides in the cell membrane. Carrier protein involved in proton-driven auxin influx. May mediate the formation of auxin gradient from developing leaves (site of auxin biosynthesis) to tips. This is Auxin transporter-like protein 3 from Oryza sativa subsp. japonica (Rice).